The sequence spans 834 residues: Enhancer of filamentation 1 (834 aa).

One can recognise an SH3 domain in the interval 3–65 (ARNLMARALY…PGNRVKLLIG (63 aa)). A phosphotyrosine mark is found at Tyr-92, Tyr-164, Tyr-166, Tyr-177, Tyr-189, Tyr-214, and Tyr-223. Residue Ser-296 is modified to Phosphoserine. Tyr-317 is modified (phosphotyrosine). Disordered regions lie at residues 328-402 (PPAE…DKRL) and 584-624 (SQMP…SERS). The segment covering 332–344 (TSEKANPEERDGV) has biased composition (basic and acidic residues). Residues 360–363 (DVVD) carry the Caspase cleavage related site motif. The segment covering 368–397 (LSFSSTGSTRSNMSTSSTTSKESSVSASPS) has biased composition (low complexity). Position 369 is a phosphoserine (Ser-369). The tract at residues 710–760 (FYYDQCETHYISLLNAIDALFSCVSSAQPPRIFVAHSKFVILSAHKLVFIG) is divergent helix-loop-helix motif. Residues 710-834 (FYYDQCETHY…KRSLLEMATF (125 aa)) are required for interaction with PLK1. A Phosphoserine modification is found at Ser-780. The residue at position 804 (Thr-804) is a Phosphothreonine.

This sequence belongs to the CAS family. As to quaternary structure, homodimer. Forms heterodimers with BCAR1/p130cas. Forms complexes with PTK2B/RAFTK, adapter protein CRKL and LYN kinase. Part of a complex composed of NEDD9, AURKA and CTTN; within the complex NEDD9 acts as a scaffold protein and is required for complex formation. Part of a ternary complex composed of SMAD3, ITCH/AIP4 and NEDD9/HEF1; within the complex NEDD9/HEF1 interacts (via N-terminus) with ITCH/AIP4; the complex mediates ubiquitination and proteasomal degradation of NEDD9/HEF1. Interacts with ID2. Interacts with CTTN (via N-terminus). Interacts with MICAL. Interacts with TXNL4/DIM1. Interacts with BCAR3 (via Ras-GEF domain). Interacts with SH2D3C isoform 1 and isoform 2. Interacts with BCAR3. Interacts with ECT2. Interacts with PTPN11/SHP-2 (via SH2 domains); the interaction is enhanced when NEDD9/CAS-L is tyrosine phosphorylated. Interacts (via C-terminus) with PLK1 (via polo box domain). Interacts with NKX2-5. Interacts with SMAD3; the interaction is inhibited by oxidation of NEDD9. Interacts with ABL1; interaction is induced by CXCL12-mediated phosphorylation of NEDD/HEF1. Interacts (via SH3 domain) with PTK2/FAK. Interacts with FYN; in the presence of PTK2. Interacts with INPPL1/SHIP2. Polyubiquitinated by ITCH/AIP4, leading to proteasomal degradation. In terms of processing, PTK2/FAK1 phosphorylates the protein at the YDYVHL motif (conserved among all cas proteins) following integrin stimulation. The SRC family kinases (FYN, SRC, LCK and CRK) are recruited to the phosphorylated sites and can phosphorylate other tyrosine residues. Ligation of either integrin beta-1 or B-cell antigen receptor on tonsillar B-cells and B-cell lines promotes tyrosine phosphorylation and both integrin and BCR-mediated tyrosine phosphorylation requires an intact actin network. Phosphorylation is required to recruit NEDD9 to T-cell receptor microclusters at the periphery of newly formed immunological synapses. In fibroblasts transformation with oncogene v-ABL results in an increase in tyrosine phosphorylation. Transiently phosphorylated following CD3 cross-linking and this phosphorylated form binds to CRKL and C3G. A mutant lacking the SH3 domain is phosphorylated upon CD3 cross-linking but not upon integrin beta-1 cross-linking. Tyrosine phosphorylation occurs upon stimulation of the G-protein coupled C1a calcitonin receptor. Calcitonin-stimulated tyrosine phosphorylation is mediated by calcium- and protein kinase C-dependent mechanisms and requires the integrity of the actin cytoskeleton. Phosphorylation at Ser-369 induces proteasomal degradation. Phosphorylated by LYN. Phosphorylation at Ser-780 by CSNK1D or CSNK1E, or phosphorylation of Thr-804 by CSNK1E enhances the interaction of NEDD9 with PLK1.

It is found in the cytoplasm. Its subcellular location is the cell cortex. The protein resides in the nucleus. It localises to the golgi apparatus. The protein localises to the cell projection. It is found in the lamellipodium. Its subcellular location is the cell junction. The protein resides in the focal adhesion. It localises to the cytoskeleton. The protein localises to the spindle pole. It is found in the cilium. Its subcellular location is the cilium basal body. The protein resides in the basolateral cell membrane. Functionally, negatively regulates embryonic fibroblast migration. May play an important role in integrin beta-1 or B cell antigen receptor (BCR) mediated signaling in B- and T-cells. Integrin beta-1 stimulation leads to recruitment of various proteins including CRKl and SHPTP2 to the tyrosine phosphorylated form. Promotes adhesion and migration of lymphocytes; as a result required for the correct migration of lymphocytes to the spleen and other secondary lymphoid organs. Plays a role in the organization of T-cell F-actin cortical cytoskeleton and the centralization of T-cell receptor microclusters at the immunological synapse. Negatively regulates cilia outgrowth in polarized cysts. Modulates cilia disassembly via activation of AURKA-mediated phosphorylation of HDAC6 and subsequent deacetylation of alpha-tubulin. In conjunction with NKX2-5, positively regulates transcription of genes such as COL3A1 and MMP2, resulting in increased pulmonary endothelial fibrosis in response to hypoxia. Positively regulates RANKL-induced osteoclastogenesis. Required for the maintenance of hippocampal dendritic spines in the dentate gyrus and CA1 regions, thereby involved in spatial learning and memory. This Canis lupus familiaris (Dog) protein is Enhancer of filamentation 1.